The following is a 289-amino-acid chain: Pantothenate synthetase (289 aa).

33-40 is a binding site for ATP; the sequence is MGNLHDGH. The active-site Proton donor is the His40. Gln64 serves as a coordination point for (R)-pantoate. Gln64 lines the beta-alanine pocket. Residue 155-158 coordinates ATP; sequence GKKD. Gln161 serves as a coordination point for (R)-pantoate. Residues Ala184 and 192–195 contribute to the ATP site; that span reads LSSR.

This sequence belongs to the pantothenate synthetase family. As to quaternary structure, homodimer.

The protein localises to the cytoplasm. It carries out the reaction (R)-pantoate + beta-alanine + ATP = (R)-pantothenate + AMP + diphosphate + H(+). The protein operates within cofactor biosynthesis; (R)-pantothenate biosynthesis; (R)-pantothenate from (R)-pantoate and beta-alanine: step 1/1. Functionally, catalyzes the condensation of pantoate with beta-alanine in an ATP-dependent reaction via a pantoyl-adenylate intermediate. This chain is Pantothenate synthetase, found in Acidovorax sp. (strain JS42).